The following is a 685-amino-acid chain: DNA ligase (685 aa).

Residues 47–51 (DSEYD), 96–97 (SL), and Glu-125 each bind NAD(+). The N6-AMP-lysine intermediate role is filled by Lys-127. Arg-148, Glu-185, Lys-304, and Lys-328 together coordinate NAD(+). The Zn(2+) site is built by Cys-422, Cys-425, Cys-440, and Cys-446. The BRCT domain maps to 605-685 (ADAQPLKGQT…ALLALFAANR (81 aa)).

This sequence belongs to the NAD-dependent DNA ligase family. LigA subfamily. Requires Mg(2+) as cofactor. The cofactor is Mn(2+).

The enzyme catalyses NAD(+) + (deoxyribonucleotide)n-3'-hydroxyl + 5'-phospho-(deoxyribonucleotide)m = (deoxyribonucleotide)n+m + AMP + beta-nicotinamide D-nucleotide.. In terms of biological role, DNA ligase that catalyzes the formation of phosphodiester linkages between 5'-phosphoryl and 3'-hydroxyl groups in double-stranded DNA using NAD as a coenzyme and as the energy source for the reaction. It is essential for DNA replication and repair of damaged DNA. This Shewanella sp. (strain W3-18-1) protein is DNA ligase.